The sequence spans 282 residues: D-alanine aminotransferase (282 aa).

Tyr-32 provides a ligand contact to substrate. Arg-51 contributes to the pyridoxal 5'-phosphate binding site. 2 residues coordinate substrate: Arg-99 and His-101. Lys-146 functions as the Proton acceptor in the catalytic mechanism. The residue at position 146 (Lys-146) is an N6-(pyridoxal phosphate)lysine. Glu-178 is a pyridoxal 5'-phosphate binding site.

Belongs to the class-IV pyridoxal-phosphate-dependent aminotransferase family. As to quaternary structure, homodimer. The cofactor is pyridoxal 5'-phosphate.

It catalyses the reaction D-alanine + 2-oxoglutarate = D-glutamate + pyruvate. Its function is as follows. Acts on the D-isomers of alanine, leucine, aspartate, glutamate, aminobutyrate, norvaline and asparagine. The enzyme transfers an amino group from a substrate D-amino acid to the pyridoxal phosphate cofactor to form pyridoxamine and an alpha-keto acid in the first half-reaction. The second half-reaction is the reverse of the first, transferring the amino group from the pyridoxamine to a second alpha-keto acid to form the product D-amino acid via a ping-pong mechanism. This is an important process in the formation of D-alanine and D-glutamate, which are essential bacterial cell wall components. The protein is D-alanine aminotransferase (dat) of Staphylococcus haemolyticus.